The chain runs to 1263 residues: DNA-directed RNA polymerase subunit beta (1263 aa).

It belongs to the RNA polymerase beta chain family. The RNAP catalytic core consists of 2 alpha, 1 beta, 1 beta' and 1 omega subunit. When a sigma factor is associated with the core the holoenzyme is formed, which can initiate transcription.

It carries out the reaction RNA(n) + a ribonucleoside 5'-triphosphate = RNA(n+1) + diphosphate. DNA-dependent RNA polymerase catalyzes the transcription of DNA into RNA using the four ribonucleoside triphosphates as substrates. The protein is DNA-directed RNA polymerase subunit beta of Thermotoga petrophila (strain ATCC BAA-488 / DSM 13995 / JCM 10881 / RKU-1).